We begin with the raw amino-acid sequence, 327 residues long: Pumilio homolog 18 (327 aa).

Positions 1-324 (MAVADNPFSM…NIANILDSFR (324 aa)) constitute a PUM-HD domain. Pumilio repeat units lie at residues 79 to 114 (SDSD…FCAA), 115 to 149 (ILRR…ALYE), 150 to 185 (RILY…DQLL), 186 to 222 (ELVA…NIAV), 223 to 260 (NLYG…ELLG), and 261 to 295 (CDGD…DLFW).

Its subcellular location is the cytoplasm. Sequence-specific RNA-binding protein that regulates translation and mRNA stability by binding the 3'-UTR of target mRNAs. This Arabidopsis thaliana (Mouse-ear cress) protein is Pumilio homolog 18 (APUM18).